The sequence spans 160 residues: UPF0178 protein PA5247 (160 aa).

This sequence belongs to the UPF0178 family.

The protein is UPF0178 protein PA5247 of Pseudomonas aeruginosa (strain ATCC 15692 / DSM 22644 / CIP 104116 / JCM 14847 / LMG 12228 / 1C / PRS 101 / PAO1).